A 97-amino-acid chain; its full sequence is UPF0235 protein Ppha_2415 (97 aa).

Belongs to the UPF0235 family.

This is UPF0235 protein Ppha_2415 from Pelodictyon phaeoclathratiforme (strain DSM 5477 / BU-1).